Reading from the N-terminus, the 318-residue chain is Aspartate carbamoyltransferase catalytic subunit (318 aa).

Carbamoyl phosphate contacts are provided by Arg-57 and Thr-58. Lys-85 contributes to the L-aspartate binding site. 3 residues coordinate carbamoyl phosphate: Arg-107, His-141, and Gln-144. The L-aspartate site is built by Arg-174 and Arg-228. Carbamoyl phosphate is bound by residues Gly-269 and Pro-270.

This sequence belongs to the aspartate/ornithine carbamoyltransferase superfamily. ATCase family. As to quaternary structure, heterododecamer (2C3:3R2) of six catalytic PyrB chains organized as two trimers (C3), and six regulatory PyrI chains organized as three dimers (R2).

The enzyme catalyses carbamoyl phosphate + L-aspartate = N-carbamoyl-L-aspartate + phosphate + H(+). The protein operates within pyrimidine metabolism; UMP biosynthesis via de novo pathway; (S)-dihydroorotate from bicarbonate: step 2/3. Functionally, catalyzes the condensation of carbamoyl phosphate and aspartate to form carbamoyl aspartate and inorganic phosphate, the committed step in the de novo pyrimidine nucleotide biosynthesis pathway. This Mycolicibacterium smegmatis (strain ATCC 700084 / mc(2)155) (Mycobacterium smegmatis) protein is Aspartate carbamoyltransferase catalytic subunit.